The sequence spans 277 residues: Myelin proteolipid protein (277 aa).

Over 2–10 (GLLECCARC) the chain is Cytoplasmic. 3 S-palmitoyl cysteine lipidation sites follow: Cys-6, Cys-7, and Cys-10. Residues 11–36 (LIGAPFASLVATGLCFFGVALFCGCG) traverse the membrane as a helical segment. The Extracellular segment spans residues 37-59 (HEALTGTEQLIETYFSKNYQDYE). A helical membrane pass occupies residues 60–88 (FLIDVIHGFQYFIYGTAAFFFLYGALLLA). The Cytoplasmic segment spans residues 89–151 (EGFYTTGAVR…LGKWLGHPDK (63 aa)). Residues Cys-109, Cys-139, and Cys-141 are each lipidated (S-palmitoyl cysteine). Residues 152-178 (FVGITYVLTIIWLLVFACSAVPVYIYF) traverse the membrane as a helical segment. Topologically, residues 179–238 (NTWTTCQSIGNPTKTSASIGTLCADARMYGILPWNAFPGKVCGSNLLSICKTSEFQMTFH) are extracellular. 2 disulfide bridges follow: Cys-184–Cys-228 and Cys-201–Cys-220. A lipid anchor (O-palmitoyl threonine) is attached at Thr-199. Residues 239-268 (LFIAAFVGAAATLVSLVTFIIATTYNFAVL) form a helical membrane-spanning segment. Topologically, residues 269–277 (RLMGRGTKF) are cytoplasmic.

Belongs to the myelin proteolipid protein family.

Its subcellular location is the cell membrane. This is the major myelin protein from the central nervous system. It plays an important role in the formation or maintenance of the multilamellar structure of myelin. The sequence is that of Myelin proteolipid protein (PLP1) from Taeniopygia guttata (Zebra finch).